The sequence spans 482 residues: MHNHPRHEGHLHTVNVKYGYVVFLLSIVHIVVVATVPRLRKVGSSSTRRSLPWLPQIVIWAILLAILGVWNIHEWSEHYNVSIKRFGRMAYCLLPFDILLAYKYWPLENYLQNLNLHKWMSRIIVVCSMIHGIGYFVKWFVEGTFFHHLFKIDNLLGVVVFAAAVVLLVVSVALFRRQSYRLFYVSHNITIGMFVVLILFHARPPVTLFVAICGLLLAILFFIKFQTYSATPVSLKEVPNSSLVLVSFPWPDHIATSFKPGSHVRINHSNRSWKSWVFASHPFTSATLPGTSETLDLVVKKGTFIFAKDTQYNLSSPYTSLSFDDNSISRFDQSVIICGGSGISLAIPVFKYLITKLDVTMIWCTRSKADLFVLRHYSLLDKVQVYITGNDSLSVEDESEGHGLMHETIELENLEESSKNSEATKQPEILRGRPDLNNVCASLETTPNSSCVISCGPRSLVKDCENWCRNHKIESVTEIYEM.

Transmembrane regions (helical) follow at residues 16–36 (VKYG…VATV), 50–70 (SLPW…LGVW), 87–106 (GRMA…KYWP), 123–143 (IIVV…FVEG), 155–175 (LLGV…VALF), 182–202 (LFYV…LFHA), and 205–225 (PVTL…FIKF). In terms of domain architecture, Ferric oxidoreductase spans 86–198 (FGRMAYCLLP…ITIGMFVVLI (113 aa)). The 124-residue stretch at 225-348 (FQTYSATPVS…GGSGISLAIP (124 aa)) folds into the FAD-binding FR-type domain.

The protein belongs to the ferric reductase (FRE) family. AIM14 subfamily.

Its subcellular location is the membrane. Its function is as follows. Probable cell surface metalloreductase. May be involved in iron or copper homeostasis. The polypeptide is Probable metalloreductase AIM14 (AIM14) (Meyerozyma guilliermondii (strain ATCC 6260 / CBS 566 / DSM 6381 / JCM 1539 / NBRC 10279 / NRRL Y-324) (Yeast)).